Reading from the N-terminus, the 597-residue chain is Gamma-terpinene synthase, chloroplastic (597 aa).

Residues 1–47 (MATLSMQVSILNKQLKNLNSFGMRASKLPLVARRVDVSTTRLRPICS) constitute a chloroplast transit peptide. 2 residues coordinate Mn(2+): Asp350 and Asp354. The DDXXD motif signature appears at 350–354 (DDVYD). Homodimerization stretches follow at residues 356-362 (YGTLDEL) and 428-464 (EAKW…YFTL). Residues Asp494 and Glu502 each coordinate Mn(2+).

The protein belongs to the terpene synthase family. As to quaternary structure, homodimer. Mn(2+) serves as cofactor. It depends on Mg(2+) as a cofactor.

Its subcellular location is the plastid. The protein resides in the chloroplast. The catalysed reaction is (2E)-geranyl diphosphate = gamma-terpinene + diphosphate. It functions in the pathway secondary metabolite biosynthesis; terpenoid biosynthesis. In terms of biological role, involved in the biosynthesis of phenolic monoterpenes natural products thymol and carvacrol which have a broad range of biological activities acting as antimicrobial compounds, insecticides, antioxidants and pharmaceutical agents. Monoterpene synthase which catalyzes the conversion of geranyl diphosphate (GPP) to gamma-terpinene and minor amounts of other monoterpenes (e.g. alpha-thujene, alpha-terpinene, myrcene, sabinene, (+)-R-limonene, alpha-pinene and alpha-phellandrene). The sequence is that of Gamma-terpinene synthase, chloroplastic from Thymus caespititius (Cretan thyme).